A 133-amino-acid chain; its full sequence is Small ribosomal subunit protein uS8 (133 aa).

Belongs to the universal ribosomal protein uS8 family. Part of the 30S ribosomal subunit. Contacts proteins S5 and S12.

Its function is as follows. One of the primary rRNA binding proteins, it binds directly to 16S rRNA central domain where it helps coordinate assembly of the platform of the 30S subunit. This Chlamydia abortus (strain DSM 27085 / S26/3) (Chlamydophila abortus) protein is Small ribosomal subunit protein uS8.